Here is a 962-residue protein sequence, read N- to C-terminus: Protocadherin gamma-A4 (962 aa).

Residues 1–24 (MHFILDPEDPGAPQASTEGKPKHR) form a disordered region. Positions 1–59 (MHFILDPEDPGAPQASTEGKPKHRRLRGGVVMAAPPARPDHTRLLQICLLLGVLVEIRA) are cleaved as a signal peptide. Cadherin domains are found at residues 60–164 (EQIL…PPSF), 165–273 (GTEQ…APVF), 274–378 (TQPE…APEV), 379–483 (TVTS…PPTF), 484–598 (PHAS…YPTF), and 601–713 (DGST…KPSA). Topologically, residues 60–723 (EQILYSVFEE…DPDDSGLTLY (664 aa)) are extracellular. N-linked (GlcNAc...) asparagine glycans are attached at residues Asn450 and Asn576. A helical transmembrane segment spans residues 724-744 (LVVAVAAVSCVFLAFVTVLLA). The Cytoplasmic portion of the chain corresponds to 745–962 (LKLRRWHKSR…KKKSGKKEKK (218 aa)). Disordered regions lie at residues 832 to 871 (KGDP…WPNN) and 932 to 962 (ATLT…KEKK). Over residues 836–871 (NLQQAPPNTDWRFSQAQRPGTSGSQNGDDTGTWPNN) the composition is skewed to polar residues. The span at 952–962 (NKKKSGKKEKK) shows a compositional bias: basic residues.

Its subcellular location is the cell membrane. Functionally, potential calcium-dependent cell-adhesion protein. May be involved in the establishment and maintenance of specific neuronal connections in the brain. This Homo sapiens (Human) protein is Protocadherin gamma-A4 (PCDHGA4).